A 339-amino-acid polypeptide reads, in one-letter code: Isopentenyl-diphosphate delta-isomerase (339 aa).

Position 7–8 (7–8 (RK)) interacts with substrate. FMN is bound by residues Ser65, 66 to 68 (SMT), Ser96, and Asn125. 96 to 98 (SQR) is a substrate binding site. A substrate-binding site is contributed by Gln160. Glu161 serves as a coordination point for Mg(2+). FMN-binding positions include Lys192, Thr222, and 293 to 294 (AG).

Belongs to the IPP isomerase type 2 family. In terms of assembly, homooctamer. Dimer of tetramers. It depends on FMN as a cofactor. Requires NADPH as cofactor. The cofactor is Mg(2+).

The protein resides in the cytoplasm. The catalysed reaction is isopentenyl diphosphate = dimethylallyl diphosphate. Functionally, involved in the biosynthesis of isoprenoids. Catalyzes the 1,3-allylic rearrangement of the homoallylic substrate isopentenyl (IPP) to its allylic isomer, dimethylallyl diphosphate (DMAPP). In Vibrio parahaemolyticus serotype O3:K6 (strain RIMD 2210633), this protein is Isopentenyl-diphosphate delta-isomerase.